A 348-amino-acid chain; its full sequence is GTPase Obg (348 aa).

The Obg domain occupies 1–160; sequence MHFLDQAKIF…MWVWLRLKLL (160 aa). The disordered stretch occupies residues 120-145; sequence RGGDGGRGNASYKTSTNRAPRQHGPG. The region spanning 161–328 is the OBG-type G domain; the sequence is ADAGLVGLPN…VLDKLLEAIG (168 aa). Residues 167–174, 192–196, 213–216, 280–283, and 309–311 each bind GTP; these read GLPNAGKS, FTTLR, DIPG, NKID, and SGA. Mg(2+) contacts are provided by Ser174 and Thr194. A disordered region spans residues 326-348; the sequence is AIGQPEPGPDADEEEKGGDWSPI.

It belongs to the TRAFAC class OBG-HflX-like GTPase superfamily. OBG GTPase family. As to quaternary structure, monomer. Requires Mg(2+) as cofactor.

It localises to the cytoplasm. In terms of biological role, an essential GTPase which binds GTP, GDP and possibly (p)ppGpp with moderate affinity, with high nucleotide exchange rates and a fairly low GTP hydrolysis rate. Plays a role in control of the cell cycle, stress response, ribosome biogenesis and in those bacteria that undergo differentiation, in morphogenesis control. The polypeptide is GTPase Obg (Sphingopyxis alaskensis (strain DSM 13593 / LMG 18877 / RB2256) (Sphingomonas alaskensis)).